The sequence spans 245 residues: DNA polymerase III subunit epsilon (245 aa).

The a divalent metal cation site is built by Asp11 and Glu13. 4 residues coordinate substrate: Asp11, Glu13, Gln60, and His65. Residue His161 is the Proton acceptor of the active site. Asp166 provides a ligand contact to a divalent metal cation. Asp166 serves as a coordination point for substrate.

The DNA polymerase holoenzyme is a complex that contains 10 different types of subunits. These subunits are organized into 3 functionally essential subassemblies: the pol III core, the beta sliding clamp processivity factor and the clamp-loading complex. The pol III core (subunits alpha,epsilon and theta) contains the polymerase and the 3'-5' exonuclease proofreading activities. The polymerase is tethered to the template via the sliding clamp processivity factor. The clamp-loading complex assembles the beta processivity factor onto the primer template and plays a central role in the organization and communication at the replication fork. This complex contains delta, delta', psi and chi, and copies of either or both of two different DnaX proteins, gamma and tau. The composition of the holoenzyme is, therefore: (alpha,epsilon,theta)[2]-(gamma/tau)[3]-delta,delta', psi,chi-beta[4]. The cofactor is Mg(2+). Mn(2+) is required as a cofactor.

It catalyses the reaction DNA(n) + a 2'-deoxyribonucleoside 5'-triphosphate = DNA(n+1) + diphosphate. Functionally, DNA polymerase III is a complex, multichain enzyme responsible for most of the replicative synthesis in bacteria. The epsilon subunit contain the editing function and is a proofreading 3'-5' exonuclease. This chain is DNA polymerase III subunit epsilon (dnaQ), found in Buchnera aphidicola subsp. Baizongia pistaciae (strain Bp).